The sequence spans 492 residues: Transmembrane protein 39B (492 aa).

The interval 1–53 (MGGRRGPNRTSYYRNPLCEPGSSGASGGGHSSSASVSSVRSRSRTTSGTGLSS) is disordered. N-linked (GlcNAc...) asparagine glycosylation occurs at asparagine 8. Residues 31-53 (SSSASVSSVRSRSRTTSGTGLSS) show a composition bias toward low complexity. Helical transmembrane passes span 77–97 (SILFELQLFFCQLIALFVHYI), 115–135 (TSLNFHLIDFNLLMVTAIVLG), 153–175 (SLFRSILLFLTRFTVLTATGWSL), 185–205 (TYSFLNLLFLCYPFGMYIPFL), 288–308 (EVLVSSMLSAYYVAFVPVWFV), 322–342 (LFLLVSISTSVILMQHLLPAS), 421–441 (ILNILLLLEGAVIVYQLYSLM), and 447–467 (HQTISLALILFSNYYAFFKLL).

The protein belongs to the TMEM39 family.

The protein resides in the endoplasmic reticulum membrane. May protect the cells against DNA damage caused by exposure to the cold-warming stress and facilitates tissue damage repair during the recovery phase. The chain is Transmembrane protein 39B from Mus musculus (Mouse).